The following is a 355-amino-acid chain: 3-dehydroquinate synthase (355 aa).

NAD(+) is bound by residues 67–72 (DGEIYK), 101–105 (GVIGD), 125–126 (TT), lysine 138, lysine 147, and 165–168 (FLNT). 3 residues coordinate Zn(2+): glutamate 180, histidine 243, and histidine 260.

The protein belongs to the sugar phosphate cyclases superfamily. Dehydroquinate synthase family. It depends on NAD(+) as a cofactor. Requires Co(2+) as cofactor. Zn(2+) serves as cofactor.

It localises to the cytoplasm. The catalysed reaction is 7-phospho-2-dehydro-3-deoxy-D-arabino-heptonate = 3-dehydroquinate + phosphate. It functions in the pathway metabolic intermediate biosynthesis; chorismate biosynthesis; chorismate from D-erythrose 4-phosphate and phosphoenolpyruvate: step 2/7. Functionally, catalyzes the conversion of 3-deoxy-D-arabino-heptulosonate 7-phosphate (DAHP) to dehydroquinate (DHQ). In Buchnera aphidicola subsp. Baizongia pistaciae (strain Bp), this protein is 3-dehydroquinate synthase.